A 338-amino-acid polypeptide reads, in one-letter code: Anthranilate phosphoribosyltransferase (338 aa).

Residues Gly-78, 81-82, Ser-86, 88-91, 106-114, and Ser-118 contribute to the 5-phospho-alpha-D-ribose 1-diphosphate site; these read GD, NIST, and KHGNRSITS. Anthranilate is bound at residue Gly-78. Ser-90 serves as a coordination point for Mg(2+). Asn-109 is a binding site for anthranilate. Arg-163 is a binding site for anthranilate. The Mg(2+) site is built by Asp-222 and Glu-223.

Belongs to the anthranilate phosphoribosyltransferase family. Homodimer. Requires Mg(2+) as cofactor.

It carries out the reaction N-(5-phospho-beta-D-ribosyl)anthranilate + diphosphate = 5-phospho-alpha-D-ribose 1-diphosphate + anthranilate. It participates in amino-acid biosynthesis; L-tryptophan biosynthesis; L-tryptophan from chorismate: step 2/5. Catalyzes the transfer of the phosphoribosyl group of 5-phosphorylribose-1-pyrophosphate (PRPP) to anthranilate to yield N-(5'-phosphoribosyl)-anthranilate (PRA). The chain is Anthranilate phosphoribosyltransferase from Staphylococcus haemolyticus (strain JCSC1435).